A 154-amino-acid chain; its full sequence is Phospholipase A2 OS1 (154 aa).

The signal sequence occupies residues 1–27 (MHPAHLLVLLAVCVSLLGAARIPPLPL). Cystine bridges form between C38/C104, C54/C153, C56/C72, C71/C132, C78/C125, C88/C118, and C111/C123. Positions 57 and 59 each coordinate Ca(2+). H75 is an active-site residue. D76 is a Ca(2+) binding site. D126 is a catalytic residue.

It belongs to the phospholipase A2 family. Group I subfamily. D49 sub-subfamily. As to quaternary structure, monomer. Ca(2+) serves as cofactor. As to expression, expressed by the venom gland.

Its subcellular location is the secreted. It catalyses the reaction a 1,2-diacyl-sn-glycero-3-phosphocholine + H2O = a 1-acyl-sn-glycero-3-phosphocholine + a fatty acid + H(+). Functionally, snake venom phospholipase A2 (PLA2) that has a low specific activity on phospholipid substrates, and is neither neurotoxic, nor myotoxic. Induces endothelial cell migration which is mediated, at least in part, by its hydrolytic products. Shows antimalarial activity, but is not able to potently inhibit HIV-1 replication. Binds in a calcium-independent fashion with very high affinity to a muscle-type (M-type) PLA2 receptor, but is a very poor ligand for neuronal-type (N-type) receptors. PLA2 catalyzes the calcium-dependent hydrolysis of the 2-acyl groups in 3-sn-phosphoglycerides. The polypeptide is Phospholipase A2 OS1 (Oxyuranus scutellatus scutellatus (Australian taipan)).